Consider the following 478-residue polypeptide: Maintenance of telomere capping protein 1 (478 aa).

The segment at 1-153 is disordered; sequence MSENKNSEAE…LHDPIASISN (153 aa). Composition is skewed to basic and acidic residues over residues 77–87 and 95–124; these read TDKKGVEKKAP and AQDE…QQQE. The segment covering 125–141 has biased composition (acidic residues); that stretch reads KEEEEEEEEEEEEEEEE. A Phosphoserine modification is found at serine 273. Composition is skewed to basic and acidic residues over residues 321-336 and 421-435; these read QKQQ…DDRS and SEER…KQKE. Disordered stretches follow at residues 321–341 and 416–448; these read QKQQ…ISSN and TGST…IIDP. At serine 436 the chain carries Phosphoserine. Over residues 436-447 the composition is skewed to acidic residues; the sequence is SEDEDEDDEIID.

Belongs to the MTC1 family. As to quaternary structure, interacts with ribosomes.

The protein resides in the cytoplasm. Its subcellular location is the cytoplasmic vesicle. The protein localises to the COPI-coated vesicle. In terms of biological role, involved in telomere capping. The polypeptide is Maintenance of telomere capping protein 1 (MTC1) (Saccharomyces cerevisiae (strain ATCC 204508 / S288c) (Baker's yeast)).